The primary structure comprises 387 residues: Succinate--CoA ligase [ADP-forming] subunit beta (387 aa).

Residues 9-245 form the ATP-grasp domain; it reads KDLLESYGLK…KSQENAKELK (237 aa). Residues K46, 53-55, E100, Y103, and E108 contribute to the ATP site; that span reads GRG. Residues N200 and D214 each contribute to the Mg(2+) site. Residues N265 and 322–324 contribute to the substrate site; that span reads GIV.

It belongs to the succinate/malate CoA ligase beta subunit family. Heterotetramer of two alpha and two beta subunits. The cofactor is Mg(2+).

The enzyme catalyses succinate + ATP + CoA = succinyl-CoA + ADP + phosphate. It catalyses the reaction GTP + succinate + CoA = succinyl-CoA + GDP + phosphate. The protein operates within carbohydrate metabolism; tricarboxylic acid cycle; succinate from succinyl-CoA (ligase route): step 1/1. Its function is as follows. Succinyl-CoA synthetase functions in the citric acid cycle (TCA), coupling the hydrolysis of succinyl-CoA to the synthesis of either ATP or GTP and thus represents the only step of substrate-level phosphorylation in the TCA. The beta subunit provides nucleotide specificity of the enzyme and binds the substrate succinate, while the binding sites for coenzyme A and phosphate are found in the alpha subunit. In Francisella tularensis subsp. holarctica (strain OSU18), this protein is Succinate--CoA ligase [ADP-forming] subunit beta.